The sequence spans 379 residues: Histidinol-phosphate aminotransferase (379 aa).

Lys231 carries the N6-(pyridoxal phosphate)lysine modification.

Belongs to the class-II pyridoxal-phosphate-dependent aminotransferase family. Histidinol-phosphate aminotransferase subfamily. As to quaternary structure, homodimer. It depends on pyridoxal 5'-phosphate as a cofactor.

The enzyme catalyses L-histidinol phosphate + 2-oxoglutarate = 3-(imidazol-4-yl)-2-oxopropyl phosphate + L-glutamate. It participates in amino-acid biosynthesis; L-histidine biosynthesis; L-histidine from 5-phospho-alpha-D-ribose 1-diphosphate: step 7/9. The sequence is that of Histidinol-phosphate aminotransferase from Mycolicibacterium smegmatis (strain ATCC 700084 / mc(2)155) (Mycobacterium smegmatis).